The following is a 307-amino-acid chain: Cytochrome c1, heme protein, mitochondrial (307 aa).

The transit peptide at 1 to 56 (MFQFVKKKNEFLKFARLGSRAFTQNAQKTHSKGSNIALVSSSLLSVGMIALYYNVY) directs the protein to the mitochondrion. The Mitochondrial intermembrane segment spans residues 57–269 (GPSLSAGTPK…EPELDIRKKM (213 aa)). Positions 89-259 (ASLRRGFQVY…DVVNFLHWAS (171 aa)) constitute a Cytochrome c domain. Residues cysteine 102, cysteine 105, histidine 106, and methionine 225 each contribute to the heme c site. The helical transmembrane segment at 270-287 (GFQVITVLTILTALSMWY) threads the bilayer. The Mitochondrial matrix portion of the chain corresponds to 288–307 (KRFKWTPIKNRKIFYQRPIK).

It belongs to the cytochrome c family. As to quaternary structure, component of the ubiquinol-cytochrome c oxidoreductase (cytochrome b-c1 complex, complex III, CIII), a multisubunit enzyme composed of 3 respiratory subunits cytochrome b, cytochrome c1 and Rieske protein, 2 core protein subunits, and additional low-molecular weight protein subunits. The complex exists as an obligatory dimer and forms supercomplexes (SCs) in the inner mitochondrial membrane with cytochrome c oxidase (complex IV, CIV). Requires heme c as cofactor.

The protein localises to the mitochondrion inner membrane. The catalysed reaction is a quinol + 2 Fe(III)-[cytochrome c](out) = a quinone + 2 Fe(II)-[cytochrome c](out) + 2 H(+)(out). Functionally, component of the ubiquinol-cytochrome c oxidoreductase, a multisubunit transmembrane complex that is part of the mitochondrial electron transport chain which drives oxidative phosphorylation. The respiratory chain contains 3 multisubunit complexes succinate dehydrogenase (complex II, CII), ubiquinol-cytochrome c oxidoreductase (cytochrome b-c1 complex, complex III, CIII) and cytochrome c oxidase (complex IV, CIV), that cooperate to transfer electrons derived from NADH and succinate to molecular oxygen, creating an electrochemical gradient over the inner membrane that drives transmembrane transport and the ATP synthase. The cytochrome b-c1 complex catalyzes electron transfer from ubiquinol to cytochrome c, linking this redox reaction to translocation of protons across the mitochondrial inner membrane, with protons being carried across the membrane as hydrogens on the quinol. In the process called Q cycle, 2 protons are consumed from the matrix, 4 protons are released into the intermembrane space and 2 electrons are passed to cytochrome c. Cytochrome c1 is a catalytic core subunit containing a c-type heme. It transfers electrons from the [2Fe-2S] iron-sulfur cluster of the Rieske protein to cytochrome c. The polypeptide is Cytochrome c1, heme protein, mitochondrial (cyt1) (Schizosaccharomyces pombe (strain 972 / ATCC 24843) (Fission yeast)).